The sequence spans 37 residues: Large ribosomal subunit protein bL36 (37 aa).

This sequence belongs to the bacterial ribosomal protein bL36 family.

The chain is Large ribosomal subunit protein bL36 from Thioalkalivibrio sulfidiphilus (strain HL-EbGR7).